Reading from the N-terminus, the 356-residue chain is 45 kDa calcium-binding protein (356 aa).

A signal peptide spans 1 to 29 (MMSRQAFLCSLGSLYLSLLFVFLLMDVYA). N33 carries N-linked (GlcNAc...) asparagine glycosylation. 5 consecutive EF-hand domains span residues 92–127 (KNRK…KTDE), 131–166 (EAVE…SKGL), 227–262 (MLKF…TVEN), 272–307 (WVKD…MNEY), and 308–343 (NALN…FTGS). The Ca(2+) site is built by D105, D107, D109, K111, E116, D144, D146, D148, H150, E155, D240, D242, D244, K246, E251, D285, N287, D289, E296, D321, N323, N325, H327, and E332.

The protein belongs to the CREC family.

Its subcellular location is the golgi apparatus lumen. In terms of biological role, may regulate calcium-dependent activities in the endoplasmic reticulum lumen or post-ER compartment. This is 45 kDa calcium-binding protein (SDF4) from Gallus gallus (Chicken).